The following is a 199-amino-acid chain: Recombination protein RecR (199 aa).

The C4-type zinc-finger motif lies at 60–75 (CARCHTFTEGEVCSTC). Positions 83–178 (SRLAVVETPA…HVTRLARGVP (96 aa)) constitute a Toprim domain.

Belongs to the RecR family.

Its function is as follows. May play a role in DNA repair. It seems to be involved in an RecBC-independent recombinational process of DNA repair. It may act with RecF and RecO. The polypeptide is Recombination protein RecR (Paracidovorax citrulli (strain AAC00-1) (Acidovorax citrulli)).